A 255-amino-acid polypeptide reads, in one-letter code: Small ribosomal subunit protein uS2 (255 aa).

The protein belongs to the universal ribosomal protein uS2 family.

The polypeptide is Small ribosomal subunit protein uS2 (Streptococcus thermophilus (strain ATCC BAA-491 / LMD-9)).